Reading from the N-terminus, the 227-residue chain is Basic leucine zipper 24 (227 aa).

Positions 44–68 are disordered; sequence EDKDQDRVTRGCSHTHSCNPPGPED. In terms of domain architecture, bZIP spans 94–160; that stretch reads DSSNKKRLCG…IRLRALLVEM (67 aa). Positions 98 to 118 are basic motif; that stretch reads KKRLCGNREAVRKYREKKKAR. Positions 122–129 are leucine-zipper; the sequence is LEDEVMRL.

Homodimer. In terms of tissue distribution, expressed in young leaves and cauline leaves.

The protein localises to the nucleus. It is found in the cytoplasm. Its function is as follows. Transcription factor involved in the regulation of salt stress response. Functions as a negative transcriptional regulator of salt stress acclimation response by regulating cation homeostasis. Negatively regulates the expression of genes contributing to ion and osmotic homeostasis during salt stress, such as the Na(+) transporter HKT1, the Na(+)/H(+) antiporter SOS1, the aquaporin PIP2-1 and the glutamine synthetase GLN1-3. In addition, targets genes with functions in plant growth and development, such as argonaute 4 (AGO4) and cyclophilin 19 (CYP19). The chain is Basic leucine zipper 24 from Arabidopsis thaliana (Mouse-ear cress).